We begin with the raw amino-acid sequence, 714 residues long: Fatty acid oxidation complex subunit alpha (714 aa).

An enoyl-CoA hydratase region spans residues 1–190 (MEMASAFTLN…KLGLVDDVVP (190 aa)). Positions 306–714 (APLNSVGILG…FWKTTATDLQ (409 aa)) are 3-hydroxyacyl-CoA dehydrogenase.

This sequence in the N-terminal section; belongs to the enoyl-CoA hydratase/isomerase family. It in the central section; belongs to the 3-hydroxyacyl-CoA dehydrogenase family. In terms of assembly, heterotetramer of two alpha chains (FadJ) and two beta chains (FadI).

Its subcellular location is the cytoplasm. The enzyme catalyses a (3S)-3-hydroxyacyl-CoA = a (2E)-enoyl-CoA + H2O. It catalyses the reaction a 4-saturated-(3S)-3-hydroxyacyl-CoA = a (3E)-enoyl-CoA + H2O. The catalysed reaction is a (3S)-3-hydroxyacyl-CoA + NAD(+) = a 3-oxoacyl-CoA + NADH + H(+). It carries out the reaction (3S)-3-hydroxybutanoyl-CoA = (3R)-3-hydroxybutanoyl-CoA. It participates in lipid metabolism; fatty acid beta-oxidation. In terms of biological role, catalyzes the formation of a hydroxyacyl-CoA by addition of water on enoyl-CoA. Also exhibits 3-hydroxyacyl-CoA epimerase and 3-hydroxyacyl-CoA dehydrogenase activities. The chain is Fatty acid oxidation complex subunit alpha from Escherichia coli O6:H1 (strain CFT073 / ATCC 700928 / UPEC).